Reading from the N-terminus, the 298-residue chain is Heat stress transcription factor C-2a (298 aa).

Residues 105-128 (SSGGGGAKRKEEAGGCGGGGEAAA) form a disordered region. The interval 145-181 (LRREQREIEGRVAAMWRRVQETERRPKQMLAFLVKVV) is hydrophobic repeat HR-A/B. The Nuclear localization signal motif lies at 213 to 216 (KRPR).

It belongs to the HSF family. Class C subfamily. Homotrimer. Exhibits temperature-dependent phosphorylation.

The protein localises to the nucleus. Functionally, transcriptional regulator that specifically binds DNA of heat shock promoter elements (HSE). In Oryza sativa subsp. japonica (Rice), this protein is Heat stress transcription factor C-2a (HSFC2A).